The following is a 149-amino-acid chain: Large ribosomal subunit protein bL9 (149 aa).

Belongs to the bacterial ribosomal protein bL9 family.

Its function is as follows. Binds to the 23S rRNA. The sequence is that of Large ribosomal subunit protein bL9 from Geobacillus thermodenitrificans (strain NG80-2).